The primary structure comprises 245 residues: Cuticle protein (245 aa).

A Chitin-binding type R&amp;R domain is found at 25 to 86 (VSYAAAPALV…TGDSKSQQES (62 aa)). A disordered region spans residues 79 to 100 (DSKSQQESRSGDVVQGSYSVVD). 3 tandem repeats follow at residues 92-95 (VQGS), 108-111 (VDYT), and 118-121 (FNAV).

In terms of biological role, component of the cuticle of African malaria mosquito. The chain is Cuticle protein (Ccp84Ab) from Anopheles gambiae (African malaria mosquito).